A 177-amino-acid polypeptide reads, in one-letter code: Large ribosomal subunit protein uL6 (177 aa).

It belongs to the universal ribosomal protein uL6 family. As to quaternary structure, part of the 50S ribosomal subunit.

In terms of biological role, this protein binds to the 23S rRNA, and is important in its secondary structure. It is located near the subunit interface in the base of the L7/L12 stalk, and near the tRNA binding site of the peptidyltransferase center. The chain is Large ribosomal subunit protein uL6 from Methanocella arvoryzae (strain DSM 22066 / NBRC 105507 / MRE50).